We begin with the raw amino-acid sequence, 167 residues long: Bacterioferritin (167 aa).

Residues 1–145 form the Ferritin-like diiron domain; that stretch reads MQGDPEVIEF…TQLDLIEKLG (145 aa). Residues Glu18 and Glu51 each contribute to the Fe cation site. Met52 lines the heme b pocket. Residues His54, Glu94, Glu127, and His130 each coordinate Fe cation.

The protein belongs to the bacterioferritin family. Homooligomer of 24 subunits, arranged as 12 dimers, that are packed together to form an approximately spherical molecule with a central cavity, in which large amounts of iron can be deposited. Requires heme b as cofactor.

It catalyses the reaction 4 Fe(2+) + O2 + 4 H(+) = 4 Fe(3+) + 2 H2O. The enzyme catalyses Fe(2+)(in) = Fe(2+)(out). In terms of biological role, iron-storage protein, whose ferroxidase center binds Fe(2+), oxidizes it using dioxygen to Fe(3+), and participates in the subsequent Fe(3+) oxide mineral core formation within the central cavity of the BFR protein shell. The sequence is that of Bacterioferritin (bfr) from Streptomyces coelicolor (strain ATCC BAA-471 / A3(2) / M145).